The chain runs to 361 residues: Glutamate 5-kinase (361 aa).

Residue Lys14 participates in ATP binding. Positions 54, 141, and 153 each coordinate substrate. The 79-residue stretch at Lys277 to Asp355 folds into the PUA domain.

It belongs to the glutamate 5-kinase family.

It is found in the cytoplasm. The enzyme catalyses L-glutamate + ATP = L-glutamyl 5-phosphate + ADP. It functions in the pathway amino-acid biosynthesis; L-proline biosynthesis; L-glutamate 5-semialdehyde from L-glutamate: step 1/2. Functionally, catalyzes the transfer of a phosphate group to glutamate to form L-glutamate 5-phosphate. In Chlorobaculum tepidum (strain ATCC 49652 / DSM 12025 / NBRC 103806 / TLS) (Chlorobium tepidum), this protein is Glutamate 5-kinase.